The primary structure comprises 517 residues: Acyltransferase AFT15-1 (517 aa).

His-180 serves as the catalytic Proton acceptor.

It belongs to the plant acyltransferase family.

It functions in the pathway mycotoxin biosynthesis. Its function is as follows. Acyltransferase; part of the gene clusters that mediate the biosynthesis of the host-selective toxins (HSTs) AF-toxins responsible for Alternaria black spot of strawberry disease by the strawberry pathotype. AF-toxin I and III are valine derivatives of 2,3-dyhydroxy-isovaleric acid and 2-hydroxy-isovaleric acid respectively, while AF II is an isoleucine derivative of 2-hydroxy-valeric acid. These derivatives are bound to a 9,10-epoxy-8-hydroxy-9-methyl-decatrienoic acid (EDA) moiety. On cellular level, AF-toxins affect plasma membrane of susceptible cells and cause a sudden increase in loss of K(+) after a few minutes of toxin treatment. The aldo-keto reductase AFTS1 catalyzes the conversion of 2-keto-isovaleric acid (2-KIV) to 2-hydroxy-isovaleric acid (2-HIV) by reduction of its ketone to an alcohol. The acyl-CoA ligase AFT1, the hydrolase AFT2 and the enoyl-CoA hydratases AFT3 and AFT6, but also the polyketide synthase AFT9, the acyl-CoA dehydrogenase AFT10, the cytochrome P450 monooxygenase AFT11 and the oxidoreductase AFT12 are all involved in the biosynthesis of the AK-, AF- and ACT-toxin common EDA structural moiety. The exact function of each enzyme, and of additional enzymes identified within the AF-toxin clusters have still to be determined. This is Acyltransferase AFT15-1 (AFT15-1) from Alternaria alternata (Alternaria rot fungus).